The chain runs to 485 residues: Rhamnulokinase (485 aa).

11 to 15 (ASSGR) provides a ligand contact to ATP. Residues A79 and 234–236 (HDT) contribute to the substrate site. The active-site Proton acceptor is D235. T257 lines the ATP pocket. N294 contributes to the substrate binding site. Residues Q302 and G401 each contribute to the ATP site.

Belongs to the rhamnulokinase family. The cofactor is Mg(2+).

It catalyses the reaction L-rhamnulose + ATP = L-rhamnulose 1-phosphate + ADP + H(+). The protein operates within carbohydrate degradation; L-rhamnose degradation; glycerone phosphate from L-rhamnose: step 2/3. Involved in the catabolism of L-rhamnose (6-deoxy-L-mannose). Catalyzes the transfer of the gamma-phosphate group from ATP to the 1-hydroxyl group of L-rhamnulose to yield L-rhamnulose 1-phosphate. The protein is Rhamnulokinase of Ligilactobacillus salivarius (strain UCC118) (Lactobacillus salivarius).